A 301-amino-acid chain; its full sequence is Protoheme IX farnesyltransferase 1 (301 aa).

The next 9 membrane-spanning stretches (helical) occupy residues 29–49 (VVAL…PHAV), 51–71 (VQPL…AAAL), 101–121 (ALIF…SLVN), 123–143 (LTAW…TAYL), 150–170 (NIVI…TAVT), 177–197 (ALLL…ALAI), 223–243 (CILL…LVGM), 244–264 (CGPV…YKAW), and 275–295 (AMQV…ALLL).

The protein belongs to the UbiA prenyltransferase family. Protoheme IX farnesyltransferase subfamily.

The protein localises to the cell inner membrane. It catalyses the reaction heme b + (2E,6E)-farnesyl diphosphate + H2O = Fe(II)-heme o + diphosphate. Its pathway is porphyrin-containing compound metabolism; heme O biosynthesis; heme O from protoheme: step 1/1. Its function is as follows. Converts heme B (protoheme IX) to heme O by substitution of the vinyl group on carbon 2 of heme B porphyrin ring with a hydroxyethyl farnesyl side group. The protein is Protoheme IX farnesyltransferase 1 of Shewanella baltica (strain OS185).